A 257-amino-acid chain; its full sequence is Spindlin-2C (257 aa).

A disordered region spans residues 1–47; the sequence is MKTPHKKGAAKEQMGEGVGHHIGSTTIKKKKASQKRQRSRSSSRRSI. Basic residues predominate over residues 27 to 43; that stretch reads IKKKKASQKRQRSRSSS. 3 tudor-like domain regions span residues 48-97, 127-176, and 208-253; these read VGCR…LELH, IGKA…YQLL, and IGKH…YDLV. 2 histone H3K4me3 and H3R8me2a binding regions span residues glutamate 136 and 244–246; that span reads DFH.

The protein belongs to the SPIN/STSY family. In terms of assembly, interacts with C11orf84/SPINDOC.

It is found in the nucleus. Functionally, may be involved in the regulation of cell cycle progression. Exhibits H3K4me3-binding activity. This chain is Spindlin-2C (Spin2c), found in Mus musculus (Mouse).